The following is a 290-amino-acid chain: Pyridoxal 5'-phosphate synthase subunit PdxS (290 aa).

Aspartate 22 contacts D-ribose 5-phosphate. The Schiff-base intermediate with D-ribose 5-phosphate role is filled by lysine 79. Glycine 151 serves as a coordination point for D-ribose 5-phosphate. Arginine 163 is a D-glyceraldehyde 3-phosphate binding site. D-ribose 5-phosphate-binding positions include glycine 212 and 233-234 (GS).

The protein belongs to the PdxS/SNZ family. In terms of assembly, in the presence of PdxT, forms a dodecamer of heterodimers.

It carries out the reaction aldehydo-D-ribose 5-phosphate + D-glyceraldehyde 3-phosphate + L-glutamine = pyridoxal 5'-phosphate + L-glutamate + phosphate + 3 H2O + H(+). The protein operates within cofactor biosynthesis; pyridoxal 5'-phosphate biosynthesis. Catalyzes the formation of pyridoxal 5'-phosphate from ribose 5-phosphate (RBP), glyceraldehyde 3-phosphate (G3P) and ammonia. The ammonia is provided by the PdxT subunit. Can also use ribulose 5-phosphate and dihydroxyacetone phosphate as substrates, resulting from enzyme-catalyzed isomerization of RBP and G3P, respectively. The sequence is that of Pyridoxal 5'-phosphate synthase subunit PdxS from Clostridium botulinum (strain Loch Maree / Type A3).